A 495-amino-acid chain; its full sequence is EF-hand calcium-binding domain-containing protein 14 (495 aa).

Disordered regions lie at residues 1-50 (MKKR…EEEE) and 381-404 (TNKPESNRPPETADEEQVESFTSK). Phosphoserine is present on serine 17. Residues 18–31 (RRKKPKKGPSSHRL) show a composition bias toward basic residues. Residues 37 to 50 (PDSDSESSSEEEEE) show a composition bias toward acidic residues. EF-hand domains lie at 434 to 463 (SSTEDLQDLFRKTGQDVDGKLTYQEIWTSL) and 464 to 495 (GSAMPEPESLRAFDSDGDGRYSFLELRVALGI). Aspartate 477, aspartate 479, aspartate 481, arginine 483, and glutamate 488 together coordinate Ca(2+).

This is EF-hand calcium-binding domain-containing protein 14 (EFCAB14) from Homo sapiens (Human).